The primary structure comprises 277 residues: Phosphatidylglycerol--prolipoprotein diacylglyceryl transferase (277 aa).

4 helical membrane passes run 22-42 (WYGV…LSEA), 51-71 (IIVD…RIYY), 89-109 (IWHG…TAII), and 116-136 (ISFW…QAIG). An a 1,2-diacyl-sn-glycero-3-phospho-(1'-sn-glycerol)-binding site is contributed by Arg-137. Transmembrane regions (helical) follow at residues 177–197 (QPTF…LLII), 205–225 (GELF…IEGM), and 235–255 (FRVS…LIIY).

The protein belongs to the Lgt family.

The protein resides in the cell membrane. It catalyses the reaction L-cysteinyl-[prolipoprotein] + a 1,2-diacyl-sn-glycero-3-phospho-(1'-sn-glycerol) = an S-1,2-diacyl-sn-glyceryl-L-cysteinyl-[prolipoprotein] + sn-glycerol 1-phosphate + H(+). Its pathway is protein modification; lipoprotein biosynthesis (diacylglyceryl transfer). Catalyzes the transfer of the diacylglyceryl group from phosphatidylglycerol to the sulfhydryl group of the N-terminal cysteine of a prolipoprotein, the first step in the formation of mature lipoproteins. This is Phosphatidylglycerol--prolipoprotein diacylglyceryl transferase from Listeria welshimeri serovar 6b (strain ATCC 35897 / DSM 20650 / CCUG 15529 / CIP 8149 / NCTC 11857 / SLCC 5334 / V8).